Reading from the N-terminus, the 962-residue chain is Glycine dehydrogenase (decarboxylating) (962 aa).

An N6-(pyridoxal phosphate)lysine modification is found at lysine 709.

It belongs to the GcvP family. As to quaternary structure, the glycine cleavage system is composed of four proteins: P, T, L and H. The cofactor is pyridoxal 5'-phosphate.

It carries out the reaction N(6)-[(R)-lipoyl]-L-lysyl-[glycine-cleavage complex H protein] + glycine + H(+) = N(6)-[(R)-S(8)-aminomethyldihydrolipoyl]-L-lysyl-[glycine-cleavage complex H protein] + CO2. In terms of biological role, the glycine cleavage system catalyzes the degradation of glycine. The P protein binds the alpha-amino group of glycine through its pyridoxal phosphate cofactor; CO(2) is released and the remaining methylamine moiety is then transferred to the lipoamide cofactor of the H protein. This is Glycine dehydrogenase (decarboxylating) from Shewanella amazonensis (strain ATCC BAA-1098 / SB2B).